Consider the following 127-residue polypeptide: Probable 4-amino-4-deoxy-L-arabinose-phosphoundecaprenol flippase subunit ArnF (127 aa).

The helical transmembrane segment at 1 to 21 (MMGYFWALMSVLLVSGAQLMM) threads the bilayer. Residues 22 to 48 (KWAMVSLPPVGQTDALMSAFMSVTPGA) lie on the Periplasmic side of the membrane. The chain crosses the membrane as a helical span at residues 49-69 (VALVIGLFAYVFSMGCWYMAL). The Cytoplasmic segment spans residues 70–77 (RRIALSKA). Residues 78 to 98 (YPLLSLSYVLVWAAAIGLPWL) traverse the membrane as a helical segment. Residues 99–101 (HEP) are Periplasmic-facing. Residues 102-122 (FSVGKLAGVSVIFVGLLLVCL) traverse the membrane as a helical segment. Residues 123–127 (PDKKS) lie on the Cytoplasmic side of the membrane.

The protein belongs to the ArnF family. As to quaternary structure, heterodimer of ArnE and ArnF.

Its subcellular location is the cell inner membrane. It functions in the pathway bacterial outer membrane biogenesis; lipopolysaccharide biosynthesis. Functionally, translocates 4-amino-4-deoxy-L-arabinose-phosphoundecaprenol (alpha-L-Ara4N-phosphoundecaprenol) from the cytoplasmic to the periplasmic side of the inner membrane. This is Probable 4-amino-4-deoxy-L-arabinose-phosphoundecaprenol flippase subunit ArnF from Enterobacter sp. (strain 638).